The chain runs to 865 residues: Alanine--tRNA ligase (865 aa).

Zn(2+) is bound by residues His556, His560, Cys660, and His664.

It belongs to the class-II aminoacyl-tRNA synthetase family. Zn(2+) is required as a cofactor.

It is found in the cytoplasm. It catalyses the reaction tRNA(Ala) + L-alanine + ATP = L-alanyl-tRNA(Ala) + AMP + diphosphate. Functionally, catalyzes the attachment of alanine to tRNA(Ala) in a two-step reaction: alanine is first activated by ATP to form Ala-AMP and then transferred to the acceptor end of tRNA(Ala). Also edits incorrectly charged Ser-tRNA(Ala) and Gly-tRNA(Ala) via its editing domain. The protein is Alanine--tRNA ligase of Vesicomyosocius okutanii subsp. Calyptogena okutanii (strain HA).